A 438-amino-acid chain; its full sequence is MAQFFKPKKKASVNTKHLSVDVVRLDHNSAGIAFVDKKPVFIEGALPEEQAIIQFIEQKKQYSRAKLIKLTKKSSKRQAPICQHYDDCGGCNLQHLQHAEQIIAKNDKLQELMKKQGVDACDVAEPILANEHDYRRRARISLIMNKQTNQLDFGFRKKQSKEIVNVRHCPVLVKELDQHLESLYTLLNQLKGKRHLGHVELVQADNGSVLLIRHVAAFNEKDQQALLHYCEERDLILYLMPESDVLNHVYGEEPYYVIDEVKIYFTPKDFIQVNASINDSMVNQALTWLDLNADDCVLDLFCGLGNFSLPLAQKVKTVVGIEGVEEMVKRAQSNAKRNELDNVTFYQANLEEPIDQQVWASTKFTKILLDPARAGAAGVMQTVAKLKPETVVYVSCNPATLARDSQLLIQRGYKLTRLGMLDMFPHTGHLESMALFER.

The 60-residue stretch at 10–69 (KASVNTKHLSVDVVRLDHNSAGIAFVDKKPVFIEGALPEEQAIIQFIEQKKQYSRAKLIK) folds into the TRAM domain. C82, C88, C91, and C169 together coordinate [4Fe-4S] cluster. S-adenosyl-L-methionine contacts are provided by Q272, F301, N306, E322, N349, and D370. The active-site Nucleophile is C396.

The protein belongs to the class I-like SAM-binding methyltransferase superfamily. RNA M5U methyltransferase family. RlmD subfamily.

It catalyses the reaction uridine(1939) in 23S rRNA + S-adenosyl-L-methionine = 5-methyluridine(1939) in 23S rRNA + S-adenosyl-L-homocysteine + H(+). Catalyzes the formation of 5-methyl-uridine at position 1939 (m5U1939) in 23S rRNA. In Aliivibrio salmonicida (strain LFI1238) (Vibrio salmonicida (strain LFI1238)), this protein is 23S rRNA (uracil(1939)-C(5))-methyltransferase RlmD.